The following is a 198-amino-acid chain: Ribonuclease HII (198 aa).

The region spanning His10–Ser198 is the RNase H type-2 domain. Positions 16, 17, and 108 each coordinate a divalent metal cation.

The protein belongs to the RNase HII family. Mn(2+) serves as cofactor. The cofactor is Mg(2+).

It is found in the cytoplasm. It catalyses the reaction Endonucleolytic cleavage to 5'-phosphomonoester.. Its function is as follows. Endonuclease that specifically degrades the RNA of RNA-DNA hybrids. In Salmonella paratyphi A (strain AKU_12601), this protein is Ribonuclease HII.